Here is a 152-residue protein sequence, read N- to C-terminus: Synaptobrevin (152 aa).

Polar residues predominate over residues 1–16 (MENNEAPSPSGSNNND). The interval 1-30 (MENNEAPSPSGSNNNDFPILPPPPNANDNY) is disordered. Residues 1-110 (MENNEAPSPS…KRKQWWANMK (110 aa)) lie on the Cytoplasmic side of the membrane. In terms of domain architecture, v-SNARE coiled-coil homology spans 47–107 (KLQQTQAKVD…GKLKRKQWWA (61 aa)). A helical; Anchor for type IV membrane protein membrane pass occupies residues 111–130 (MMIILGVIAVVLLIIVLVSV). The Vesicular portion of the chain corresponds to 131–152 (WPSSSDSGSGGGNKAITQAPPH). The segment at 133 to 152 (SSSDSGSGGGNKAITQAPPH) is disordered.

Belongs to the synaptobrevin family. In terms of assembly, part of the SNARE core complex containing Snap25 and syntaxin. Ubiquitinated by gzl, regulating endocytic trafficking. In wing imaginal disks, ubiquitination by gzl promotes transcytosis of wingless (wg) to the basolateral surface. In terms of tissue distribution, not nervous system-specific; abundant in cells of the gut and Malpighian tubules.

The protein localises to the cytoplasmic vesicle. The protein resides in the secretory vesicle. It is found in the synaptic vesicle membrane. Its subcellular location is the cell membrane. Its function is as follows. Involved in the targeting and/or fusion of transport vesicles to their target membrane. The protein is Synaptobrevin of Drosophila melanogaster (Fruit fly).